Consider the following 535-residue polypeptide: MNTSQDVNAEAANERSALLPRFLGSHRGNVPENTDTYALTPLFYWIRSTSVGLLLITIICHLFLLLNIFISIPIISHLSPGFMPVGFTALAAILLAMQIMFVYSPNAPERVTQRIICFLLAIDVLVVFLSPILRHREGWRSNAFVLWAFLMSLWIVITDLMLFRQYKEEHPDYDAIAHRGYYWSWSPSTWPWRQVGSLTASTILSVILTILTIHTLVTLIMRAYDGALSAPGQLYTVTDSKARVHLECFGSSSSNNKTTVLVEGGEVSVHPFKEWLLNLQHTSPDLYEESKDFEGYENDVKPYLSPDTRVCVWDRPGMGWSDNIGSPSSVGIVMDLLTEALAQADVSGPYVLVAHGIGGVYSNVFAARHLSEVKGIVFVDAGSVQTLKDSGQFLSRFLLFVRGWLSPLGINRIFGSIFMGKTRQDRVYGMYSWTSDRWVKSKIEESLTGPSFSRYELQSAQSVLPKDLPVSVISAGKSMKRFKKWPDEQRQLSKLTQRTVWDIVNNAPHDVWLSDDGGDLIMKRLGEIIYGGWPN.

A run of 6 helical transmembrane segments spans residues 55–75 (LITI…IPII), 82–102 (FMPV…IMFV), 115–135 (IICF…ILRH), 143–163 (AFVL…LMLF), 201–221 (STIL…TLIM), and 346–366 (VSGP…NVFA).

It localises to the membrane. This is an uncharacterized protein from Schizosaccharomyces pombe (strain 972 / ATCC 24843) (Fission yeast).